The following is a 2048-amino-acid chain: Myoferlin (2048 aa).

A C2 1 domain is found at 1-101; the sequence is MLRVIVESAT…IGDQNRSLPY (101 aa). At 1–2012 the chain is on the cytoplasmic side; that stretch reads MLRVIVESAT…MRFIVWRRFK (2012 aa). Residues 124 to 176 form a disordered region; sequence YTPPSAPHPNDPSGTSVPGMGEEEEEDQGDEDRVDGIVRGPGPKGPSGTVSEA. The segment covering 144–156 has biased composition (acidic residues); that stretch reads GEEEEEDQGDEDR. Residues Ser170 and Ser174 each carry the phosphoserine modification. C2 domains follow at residues 183–300 and 339–475; these read TKGK…RKWL and DSDD…EATT. The segment at 186–281 is necessary for interaction with EHD2; that stretch reads KSSRRMLSNK…RADCLMGEFK (96 aa). The Ca(2+) site is built by Asp390, Asp396, Asp444, Asp446, and Asp452. Residues Lys540 and Lys871 each carry the N6-acetyllysine modification. 2 consecutive C2 domains span residues 1110–1238 and 1269–1397; these read GANT…LLWH and LPSQ…GKED. The Ca(2+) site is built by Asp1142, Asp1148, Asp1204, and Asp1206. Lys1494 is modified (N6-acetyllysine). 2 consecutive C2 domains span residues 1523–1641 and 1759–1907; these read PAPP…SHCG and GPPG…EKCS. Residues Asp1556, Asp1562, Asp1611, Asp1613, Asp1878, Ser1881, and Asp1884 each coordinate Ca(2+). Positions 1964–1975 are enriched in basic and acidic residues; that stretch reads EADERPAGKGRS. The interval 1964-1986 is disordered; the sequence is EADERPAGKGRSEPNMNPKLDPP. A helical transmembrane segment spans residues 2013–2033; it reads WVIIGLLLLLILLLFVAVLLY. The Extracellular segment spans residues 2034 to 2048; the sequence is SLPNYLSMKIVRPNA.

The protein belongs to the ferlin family. In terms of assembly, interacts with EHD1. Interacts with EHD2; the interaction is direct. Interacts with DNM2 and KDR. Interacts with RIPOR2. Ca(2+) serves as cofactor. In terms of tissue distribution, expressed in myoblasts (at protein level). Expressed in endothelial cells.

It is found in the cell membrane. The protein localises to the nucleus membrane. The protein resides in the cytoplasmic vesicle membrane. In terms of biological role, calcium/phospholipid-binding protein that plays a role in the plasmalemma repair mechanism of endothelial cells that permits rapid resealing of membranes disrupted by mechanical stress. Involved in endocytic recycling. Implicated in VEGF signal transduction by regulating the levels of the receptor KDR. The chain is Myoferlin (Myof) from Mus musculus (Mouse).